Consider the following 72-residue polypeptide: Long neurotoxin OH-5 (72 aa).

5 disulfides stabilise this stretch: C3-C22, C15-C43, C28-C32, C47-C58, and C59-C64.

The protein belongs to the three-finger toxin family. Long-chain subfamily. Type II alpha-neurotoxin sub-subfamily. In terms of tissue distribution, expressed by the venom gland.

It is found in the secreted. Functionally, binds with high affinity to muscular (alpha-1/CHRNA1) and neuronal (alpha-7/CHRNA7) nicotinic acetylcholine receptor (nAChR) and inhibits acetylcholine from binding to the receptor, thereby impairing neuromuscular and neuronal transmission. In Ophiophagus hannah (King cobra), this protein is Long neurotoxin OH-5.